We begin with the raw amino-acid sequence, 352 residues long: Peptide chain release factor 1 (352 aa).

Residue Q230 is modified to N5-methylglutamine.

It belongs to the prokaryotic/mitochondrial release factor family. Methylated by PrmC. Methylation increases the termination efficiency of RF1.

The protein resides in the cytoplasm. Its function is as follows. Peptide chain release factor 1 directs the termination of translation in response to the peptide chain termination codons UAG and UAA. In Exiguobacterium sibiricum (strain DSM 17290 / CCUG 55495 / CIP 109462 / JCM 13490 / 255-15), this protein is Peptide chain release factor 1.